A 593-amino-acid polypeptide reads, in one-letter code: MTGLLKRKFDQLDEDNSSVSSSSSSSSSSSGCQSLSCSPSSSVSRASDSEEEGPWDQMPLPDRDFCSPRSFTPLSILKRARRERPGRVAFDGITVFYFPRCQGFTSVPSRGGCTLGMAPRHSACRRFSLAEFAQEQARARHEKLRQRLKEEKLEMLQWKLSAAGAPKAEAGLPPAVDAIDDASVEEDLAVAVAGGRLEEVSFLQPYPARRRRALLRASGVRRIDREEKRELQALRQSREDCGCHCDRICDPETCSCSLAGIKCQMDHTAFPCGCCREGCENPMGRVEFNQARVQTHFIHTLTRLQLEQEAESFRELEAPAQGSPPSPGEEALVPTFPLAKPPMNNELGDNSCSSDMTDSSTASSSASGTSGAPDCPTHPGLPGPGFQPGVDDDSLARILSFSDSDFGGEEEEEEEGSVGNLDNLSCFHPADIFGTSDPGGLASWTHSYSGCSFTSGILDENANLDASCFLNGGLEGSREGSLPGTSVPPSMDAGQSSSVDLSLSSCDSFELLQALPDYSLGPHYTSQKVSDSLDNIEAPHFPLPGLSPPGDASSCFLESLMGFSEPAAEALDPFIDSQFEDTVPASLMEPVPV.

Disordered stretches follow at residues 1–66, 313–392, and 478–497; these read MTGL…RDFC, FREL…GVDD, and REGS…GQSS. Low complexity-rich tracts occupy residues 17–46 and 351–372; these read SSVS…VSRA and SCSS…TSGA.

The protein belongs to the AXUD1 family.

It is found in the nucleus. Functionally, binds to the consensus sequence 5'-AGAGTG-3' and has transcriptional activator activity. May have a tumor-suppressor function. May play a role in apoptosis. This Pongo abelii (Sumatran orangutan) protein is Cysteine/serine-rich nuclear protein 1 (CSRNP1).